Consider the following 910-residue polypeptide: METTANEHGSEAEENTAEAAPVRLTPMMEQYIEIKAANVDSLLFYRMGDFYELFFDDAVEASAALGITLTKRGKHLGEDIPMCGVPVHAADDYLQKLIAKGYRVAVCEQVEDPAEAKKRGSKSVVKRDVIRLVTPGTLTEEKLLDPSEANFLMAMGRTRGDGALALAWIDISTGTFRVAETTPDRLFADVMRVDPRELVVADSAFHDEELRPVFDLVGKAVTPQPATLFDSAAAETRIQRYFNVATLDGFGQFSRPELSAISGAIAYIEKTQISERPPLMRPEREHEGGTLFIDPATRASLELARTMSGNRDGSLLKAVDRTVTGGGARLLAERLTAPLTNPKEIALRLDSVSWFLSEQSLCEAMRAELKGVPDMPRGLSRLAVGRGGPRDLGSLARGFEAAHVIASLLESALLPDELAHARDAVSAMPAIFTAHLDRALADELPLLKRDGGFVRGGYNSELDEMRALRDQSRRVIAGLQANYIEETGIKSLKIKHNNVLGYFIEVTANNAGAMTDTDEAKSRFIHRQTMANAMRFTTTELAELESKIANAADRALSIELAVFEELTAEAVSHADSIRAAASALAVFDVSASLAVLAEEQGYCRPQVDDSLSFNIVAGRHPVVEQALRRQAANPFVANDCDLSPQADGGNGAIWLLTGPNMGGKSTFLRQNALIAIMAQMGSFVPAGSAKIGVVDRLFSRVGASDDLARGRSTFMVEMVETAAILNQAGERSLVILDEIGRGTATFDGLSIAWAAVEYLHEKNRCRALFATHFHEMTALSEKLERLSNVTMRVKEWDNDVVFLHEVAKGAADRSYGVQVARLAGLPEAVVNRARDVLHQLEAGETSGKADKLIDDLPLFSVVLQQEKPKLQVQGKDSDLTKAVSAISPDELTPREALDLIYKLKELAGRA.

Residue 658–665 coordinates ATP; the sequence is GPNMGGKS.

The protein belongs to the DNA mismatch repair MutS family.

In terms of biological role, this protein is involved in the repair of mismatches in DNA. It is possible that it carries out the mismatch recognition step. This protein has a weak ATPase activity. In Brucella anthropi (strain ATCC 49188 / DSM 6882 / CCUG 24695 / JCM 21032 / LMG 3331 / NBRC 15819 / NCTC 12168 / Alc 37) (Ochrobactrum anthropi), this protein is DNA mismatch repair protein MutS.